A 148-amino-acid chain; its full sequence is Large ribosomal subunit protein bL9 (148 aa).

Belongs to the bacterial ribosomal protein bL9 family.

In terms of biological role, binds to the 23S rRNA. In Acidithiobacillus ferrooxidans (strain ATCC 23270 / DSM 14882 / CIP 104768 / NCIMB 8455) (Ferrobacillus ferrooxidans (strain ATCC 23270)), this protein is Large ribosomal subunit protein bL9.